The chain runs to 55 residues: Large ribosomal subunit protein bL33 (55 aa).

This sequence belongs to the bacterial ribosomal protein bL33 family.

This is Large ribosomal subunit protein bL33 from Methylobacterium sp. (strain 4-46).